A 765-amino-acid polypeptide reads, in one-letter code: Putative U-box domain-containing protein 50 (765 aa).

Positions 198–391 (QEIENYFQQL…NRRIEFCKER (194 aa)) form a coiled coil. In terms of domain architecture, Protein kinase spans 422 to 765 (SDRLRLKSGG…HSKRAAQASS (344 aa)). Residues 428-436 (KSGGNWTNV) and K449 each bind ATP. Residues 688–762 (DIPSVFMCPI…QDWHSKRAAQ (75 aa)) form the U-box domain.

It belongs to the protein kinase superfamily. Ser/Thr protein kinase family.

It catalyses the reaction S-ubiquitinyl-[E2 ubiquitin-conjugating enzyme]-L-cysteine + [acceptor protein]-L-lysine = [E2 ubiquitin-conjugating enzyme]-L-cysteine + N(6)-ubiquitinyl-[acceptor protein]-L-lysine.. Its pathway is protein modification; protein ubiquitination. Its function is as follows. Functions as an E3 ubiquitin ligase. The sequence is that of Putative U-box domain-containing protein 50 (PUB50) from Arabidopsis thaliana (Mouse-ear cress).